Reading from the N-terminus, the 181-residue chain is Histone deacetylase complex subunit SAP30L-B (181 aa).

Intrachain disulfides connect cysteine 26–cysteine 27 and cysteine 35–cysteine 71. The Atypical zinc-finger motif lies at 26 to 74 (CCLIDGGERCPRPAGNASFSKRVQKSISQKKLKLDIDKSVRHLYICDFH). A disordered region spans residues 82-103 (RNKRKRKTSDDGGDSPEHETDV). Residues 83 to 88 (NKRKRK) carry the Nuclear localization signal (NLS) motif. The important for DNA and phosphoinositide binding stretch occupies residues 85 to 87 (RKR).

Belongs to the SAP30 family. In terms of assembly, interacts with components of the histone deacetylase complex sin3a, hdac1 and hdac2. Binds histones and nucleosomes.

Its subcellular location is the nucleus. It localises to the nucleolus. Functionally, functions as a transcription repressor, probably via its interaction with histone deacetylase complexes. Involved in the functional recruitment of the class 1 Sin3-histone deacetylase complex (HDAC) to the nucleolus. Binds DNA, apparently without sequence-specificity, and bends bound double-stranded DNA. Binds phosphoinositol phosphates (phosphoinositol 3-phosphate, phosphoinositol 4-phosphate and phosphoinositol 5-phosphate) via the same basic sequence motif that mediates DNA binding and nuclear import. This is Histone deacetylase complex subunit SAP30L-B (sap30l-b) from Xenopus laevis (African clawed frog).